Consider the following 467-residue polypeptide: Ribulose bisphosphate carboxylase large chain (467 aa).

The propeptide occupies 1-2; the sequence is MS. Pro-3 bears the N-acetylproline mark. Lys-14 carries the N6,N6,N6-trimethyllysine modification. Asn-123 and Thr-173 together coordinate substrate. Catalysis depends on Lys-175, which acts as the Proton acceptor. Lys-177 is a substrate binding site. Residues Lys-201, Asp-203, and Glu-204 each contribute to the Mg(2+) site. N6-carboxylysine is present on Lys-201. The active-site Proton acceptor is His-294. Residues Arg-295, His-327, and Ser-379 each contribute to the substrate site.

This sequence belongs to the RuBisCO large chain family. Type I subfamily. As to quaternary structure, heterohexadecamer of 8 large chains and 8 small chains; disulfide-linked. The disulfide link is formed within the large subunit homodimers. Mg(2+) serves as cofactor. Post-translationally, the disulfide bond which can form in the large chain dimeric partners within the hexadecamer appears to be associated with oxidative stress and protein turnover.

The protein localises to the plastid. It is found in the chloroplast. It catalyses the reaction 2 (2R)-3-phosphoglycerate + 2 H(+) = D-ribulose 1,5-bisphosphate + CO2 + H2O. The catalysed reaction is D-ribulose 1,5-bisphosphate + O2 = 2-phosphoglycolate + (2R)-3-phosphoglycerate + 2 H(+). RuBisCO catalyzes two reactions: the carboxylation of D-ribulose 1,5-bisphosphate, the primary event in carbon dioxide fixation, as well as the oxidative fragmentation of the pentose substrate in the photorespiration process. Both reactions occur simultaneously and in competition at the same active site. The sequence is that of Ribulose bisphosphate carboxylase large chain from Calamus usitatus (Palm tree).